A 276-amino-acid polypeptide reads, in one-letter code: Secretagogin (276 aa).

5 EF-hand domains span residues 12 to 47 (LDAA…LLAK), 105 to 140 (DNSV…LFLH), 149 to 184 (ELEE…QENF), 197 to 232 (ERKR…MMEL), and 240 to 276 (VDLD…KINP). Asp118, Asp120, Ser122, Glu129, Asp162, Asn164, Asp166, Arg168, Asp173, Asp210, Ser212, Thr214, Glu221, Asp254, Asn256, Asp258, Lys260, and Glu265 together coordinate Ca(2+).

In terms of tissue distribution, highly expressed in pancreas, in particular in pancreatic islets and pancreatic beta-cells. Detected in prostate, adrenal gland, small intestine, stomach and thyroid (at protein level).

The protein localises to the cytoplasm. It localises to the secreted. The protein resides in the cytoplasmic vesicle. It is found in the secretory vesicle membrane. This is Secretagogin (Scgn) from Rattus norvegicus (Rat).